Here is a 527-residue protein sequence, read N- to C-terminus: NAD(P)H-quinone oxidoreductase chain 4 1 (527 aa).

Transmembrane regions (helical) follow at residues 5 to 25 (FPWL…LPII), 35 to 55 (WYSL…FCTG), 90 to 110 (LIIL…PVSF), 112 to 132 (PKLF…VFAV), 136 to 156 (LLFF…LSIW), 168 to 188 (FILY…TMAF), 211 to 231 (LLLY…FPLH), 242 to 262 (TAPA…YALL), 274 to 294 (AVFA…AALT), 310 to 330 (ISHM…GLSG), 331 to 351 (AVLQ…LVGA), 386 to 406 (LALP…GFAT), 416 to 436 (VLVI…LLSM), and 463 to 483 (VFII…PKIV).

The protein belongs to the complex I subunit 4 family.

It localises to the cellular thylakoid membrane. The catalysed reaction is a plastoquinone + NADH + (n+1) H(+)(in) = a plastoquinol + NAD(+) + n H(+)(out). The enzyme catalyses a plastoquinone + NADPH + (n+1) H(+)(in) = a plastoquinol + NADP(+) + n H(+)(out). Functionally, NDH-1 shuttles electrons from NAD(P)H, via FMN and iron-sulfur (Fe-S) centers, to quinones in the respiratory chain. The immediate electron acceptor for the enzyme in this species is believed to be plastoquinone. Couples the redox reaction to proton translocation (for every two electrons transferred, four hydrogen ions are translocated across the cytoplasmic membrane), and thus conserves the redox energy in a proton gradient. The protein is NAD(P)H-quinone oxidoreductase chain 4 1 of Trichodesmium erythraeum (strain IMS101).